A 213-amino-acid chain; its full sequence is Ras-related protein Rab-4A (213 aa).

Residues Gly-18, Thr-19, Gly-20, Lys-21, Ser-22, Cys-23, Ser-37, His-39, and Thr-40 each coordinate GTP. Position 22 (Ser-22) interacts with Mg(2+). The Switch 1 motif lies at 39 to 44 (HTIGVE). Residues Thr-40 and Asp-63 each coordinate Mg(2+). Residues 65 to 74 (AGQERFRSVT) carry the Switch 2 motif. GTP-binding residues include Gly-66, Asn-121, Lys-122, Asp-124, Ala-152, and Leu-153. S-geranylgeranyl cysteine attachment occurs at residues Cys-211 and Cys-213. At Cys-213 the chain carries Cysteine methyl ester.

It belongs to the small GTPase superfamily. Rab family. Requires Mg(2+) as cofactor.

It localises to the membrane. It is found in the cytoplasm. The protein localises to the early endosome membrane. The protein resides in the recycling endosome membrane. The enzyme catalyses GTP + H2O = GDP + phosphate + H(+). With respect to regulation, regulated by guanine nucleotide exchange factors (GEFs) which promote the exchange of bound GDP for free GTP. Regulated by GTPase activating proteins (GAPs) which increase the GTP hydrolysis activity. Inhibited by GDP dissociation inhibitors (GDIs). In terms of biological role, the small GTPases Rab are key regulators of intracellular membrane trafficking, from the formation of transport vesicles to their fusion with membranes. Rabs cycle between an inactive GDP-bound form and an active GTP-bound form that is able to recruit to membranes different sets of downstream effectors directly responsible for vesicle formation, movement, tethering and fusion. RAB4A is involved in protein transport. Also plays a role in vesicular traffic. Mediates VEGFR2 endosomal trafficking to enhance VEGFR2 signaling. Acts as a regulator of platelet alpha-granule release during activation and aggregation of platelets. This Danio rerio (Zebrafish) protein is Ras-related protein Rab-4A (rab4a).